A 207-amino-acid chain; its full sequence is Probable RNA 2'-phosphotransferase (207 aa).

Belongs to the KptA/TPT1 family.

Functionally, removes the 2'-phosphate from RNA via an intermediate in which the phosphate is ADP-ribosylated by NAD followed by a presumed transesterification to release the RNA and generate ADP-ribose 1''-2''-cyclic phosphate (APPR&gt;P). May function as an ADP-ribosylase. This Methanosarcina mazei (strain ATCC BAA-159 / DSM 3647 / Goe1 / Go1 / JCM 11833 / OCM 88) (Methanosarcina frisia) protein is Probable RNA 2'-phosphotransferase.